A 23-amino-acid polypeptide reads, in one-letter code: NADP-dependent malic enzyme (23 aa).

This sequence belongs to the malic enzymes family. In terms of assembly, homotetramer.

It carries out the reaction (S)-malate + NADP(+) = pyruvate + CO2 + NADPH. The enzyme catalyses oxaloacetate + H(+) = pyruvate + CO2. The polypeptide is NADP-dependent malic enzyme (Populus euphratica (Euphrates poplar)).